Reading from the N-terminus, the 70-residue chain is Small ribosomal subunit protein bS21 (70 aa).

This sequence belongs to the bacterial ribosomal protein bS21 family.

The polypeptide is Small ribosomal subunit protein bS21 (Methylobacillus flagellatus (strain ATCC 51484 / DSM 6875 / VKM B-1610 / KT)).